The sequence spans 55 residues: Large ribosomal subunit protein bL33 (55 aa).

It belongs to the bacterial ribosomal protein bL33 family.

This is Large ribosomal subunit protein bL33 from Vibrio cholerae serotype O1 (strain ATCC 39541 / Classical Ogawa 395 / O395).